Here is a 101-residue protein sequence, read N- to C-terminus: Small ribosomal subunit protein uS14 (101 aa).

Belongs to the universal ribosomal protein uS14 family. In terms of assembly, part of the 30S ribosomal subunit. Contacts proteins S3 and S10.

Binds 16S rRNA, required for the assembly of 30S particles and may also be responsible for determining the conformation of the 16S rRNA at the A site. The chain is Small ribosomal subunit protein uS14 from Ehrlichia chaffeensis (strain ATCC CRL-10679 / Arkansas).